An 80-amino-acid polypeptide reads, in one-letter code: MKTTILILLILGLGINAKSLEERKSEEEKAFKLLGRIIHHVGNFVYGFSHVFGDDQQDNGKFYGHYAEDNGKHWYDTGDQ.

The first 19 residues, 1 to 19, serve as a signal peptide directing secretion; that stretch reads MKTTILILLILGLGINAKS. Residues 20–29 constitute a propeptide that is removed on maturation; the sequence is LEERKSEEEK. Residue F52 is modified to Phenylalanine amide. Residues 54 to 80 constitute a propeptide that is removed on maturation; the sequence is DDQQDNGKFYGHYAEDNGKHWYDTGDQ.

As to expression, hemocytes and pharyngeal tissues.

The protein localises to the secreted. In terms of biological role, has antimicrobial activity against E.coli, L.monocytogenes and C.albicans. The chain is Clavanin-D from Styela clava (Sea squirt).